A 448-amino-acid polypeptide reads, in one-letter code: Proton extrusion protein PxcA (448 aa).

Transmembrane regions (helical) follow at residues 231 to 251, 323 to 343, 372 to 392, and 408 to 428; these read ILLLIIIPLLIHQLTKTFFLI, IDSIANIFADLFSFIAFVLVL, LIILFTDMFVGFHSPHGWEVI, and FNFLFIATFPVILDTVLKYWI.

It belongs to the CemA family.

It is found in the cell inner membrane. In terms of biological role, required for H(+) efflux immediately after light irradiation to form a rapid H(+) concentration gradient across the thylakoid membranes. Together with PxcL, contributes to transient H(+) uptake following dark to light transition. The polypeptide is Proton extrusion protein PxcA (Rippkaea orientalis (strain PCC 8801 / RF-1) (Cyanothece sp. (strain PCC 8801))).